Reading from the N-terminus, the 33-residue chain is Photosystem II reaction center protein Psb30 (33 aa).

Residues 5–25 traverse the membrane as a helical segment; it reads VIAQLTMLTIAVITGPLVIFF.

This sequence belongs to the Psb30/Ycf12 family. PSII is composed of 1 copy each of membrane proteins PsbA, PsbB, PsbC, PsbD, PsbE, PsbF, PsbH, PsbI, PsbJ, PsbK, PsbL, PsbM, PsbT, PsbX, PsbY, PsbZ, Psb30/Ycf12, peripheral proteins of the oxygen-evolving complex and a large number of cofactors. It forms dimeric complexes.

Its subcellular location is the plastid. It is found in the chloroplast thylakoid membrane. In terms of biological role, a core subunit of photosystem II (PSII), probably helps stabilize the reaction center. This Welwitschia mirabilis (Tree tumbo) protein is Photosystem II reaction center protein Psb30.